The primary structure comprises 465 residues: Gamma-aminobutyric acid receptor subunit gamma-1 (465 aa).

The first 35 residues, 1–35 (MGPLKAFLFSPFLLRSQSRGVRLVFLLLTLHLGNC), serve as a signal peptide directing secretion. The Extracellular portion of the chain corresponds to 36-273 (VDKADDEDDE…FDLSRRMGYF (238 aa)). Asn-50 and Asn-127 each carry an N-linked (GlcNAc...) asparagine glycan. Residues Cys-188 and Cys-202 are joined by a disulfide bond. Residue Asn-245 is glycosylated (N-linked (GlcNAc...) asparagine). A helical transmembrane segment spans residues 274–294 (TIQTYIPCILTVVLSWVSFWI). Residues 295-300 (NKDAVP) lie on the Cytoplasmic side of the membrane. Residues 301–320 (ARTSLGITTVLTMTTLSTIA) form a helical membrane-spanning segment. At 321–328 (RKSLPKVS) the chain is on the extracellular side. Residues 329 to 349 (YVTAMDLFVSVCFIFVFAALM) form a helical membrane-spanning segment. Residues 350-444 (EYGTLHYFTS…RIAKIDSYSR (95 aa)) are Cytoplasmic-facing. A helical transmembrane segment spans residues 445 to 465 (IFFPTAFALFNLVYWVGYLYL).

It belongs to the ligand-gated ion channel (TC 1.A.9) family. Gamma-aminobutyric acid receptor (TC 1.A.9.5) subfamily. GABRG1 sub-subfamily. Heteropentamer, formed by a combination of alpha (GABRA1-6), beta (GABRB1-3), gamma (GABRG1-3), delta (GABRD), epsilon (GABRE), rho (GABRR1-3), pi (GABRP) and theta (GABRQ) chains, each subunit exhibiting distinct physiological and pharmacological properties. Post-translationally, may be palmitoylated.

The protein localises to the postsynaptic cell membrane. It is found in the cell membrane. The catalysed reaction is chloride(in) = chloride(out). Functionally, gamma subunit of the heteropentameric ligand-gated chloride channel gated by gamma-aminobutyric acid (GABA), a major inhibitory neurotransmitter in the brain. GABA-gated chloride channels, also named GABA(A) receptors (GABAAR), consist of five subunits arranged around a central pore and contain GABA active binding site(s) located at the alpha and beta subunit interface(s). When activated by GABA, GABAARs selectively allow the flow of chloride anions across the cell membrane down their electrochemical gradient. Chloride influx into the postsynaptic neuron following GABAAR opening decreases the neuron ability to generate a new action potential, thereby reducing nerve transmission. This chain is Gamma-aminobutyric acid receptor subunit gamma-1, found in Homo sapiens (Human).